A 315-amino-acid chain; its full sequence is Ribosomal protein L11 methyltransferase (315 aa).

The S-adenosyl-L-methionine site is built by Thr-152, Gly-185, Asp-207, and Asn-249.

This sequence belongs to the methyltransferase superfamily. PrmA family.

The protein localises to the cytoplasm. It catalyses the reaction L-lysyl-[protein] + 3 S-adenosyl-L-methionine = N(6),N(6),N(6)-trimethyl-L-lysyl-[protein] + 3 S-adenosyl-L-homocysteine + 3 H(+). Methylates ribosomal protein L11. In Geotalea uraniireducens (strain Rf4) (Geobacter uraniireducens), this protein is Ribosomal protein L11 methyltransferase.